Consider the following 131-residue polypeptide: Small ribosomal subunit protein uS8 (131 aa).

Belongs to the universal ribosomal protein uS8 family. In terms of assembly, part of the 30S ribosomal subunit. Contacts proteins S5 and S12.

In terms of biological role, one of the primary rRNA binding proteins, it binds directly to 16S rRNA central domain where it helps coordinate assembly of the platform of the 30S subunit. In Acidithiobacillus ferrooxidans (strain ATCC 23270 / DSM 14882 / CIP 104768 / NCIMB 8455) (Ferrobacillus ferrooxidans (strain ATCC 23270)), this protein is Small ribosomal subunit protein uS8.